The primary structure comprises 273 residues: Urease accessory protein UreD (273 aa).

The segment at 1–29 (MLMRTATPLDQPRAIGSARVSSKRVNGGS) is disordered.

Belongs to the UreD family. As to quaternary structure, ureD, UreF and UreG form a complex that acts as a GTP-hydrolysis-dependent molecular chaperone, activating the urease apoprotein by helping to assemble the nickel containing metallocenter of UreC. The UreE protein probably delivers the nickel.

The protein localises to the cytoplasm. Functionally, required for maturation of urease via the functional incorporation of the urease nickel metallocenter. This is Urease accessory protein UreD from Roseobacter denitrificans (strain ATCC 33942 / OCh 114) (Erythrobacter sp. (strain OCh 114)).